A 504-amino-acid chain; its full sequence is uncharacterized protein (504 aa).

A propeptide spanning residues 1–212 (MFMKSKAAGS…LYKTQDPVLD (212 aa)) is cleaved from the precursor.

This is an uncharacterized protein from Deinococcus radiodurans (strain ATCC 13939 / DSM 20539 / JCM 16871 / CCUG 27074 / LMG 4051 / NBRC 15346 / NCIMB 9279 / VKM B-1422 / R1).